The chain runs to 529 residues: HTH-type transcriptional activator Btr (529 aa).

A DNA-binding region (H-T-H motif) is located at residues 182–201; it reads LAQLSQMAGISAKHYSESFK. One can recognise a Fe/B12 periplasmic-binding domain in the interval 268-528; sequence KIAAYGRGTM…QTVSLLSGDC (261 aa).

In terms of assembly, binds with high affinity to both apo-bacillibactin and iron-bacillibactin.

It is found in the cytoplasm. In terms of biological role, in iron-limited conditions, activates expression of the feuABCybbA operon, which encodes the bacillibactin uptake system. Acts by binding directly to a conserved direct repeat element upstream of the feuA promoter. Activity is increased in the presence of bacillibactin. This Bacillus subtilis (strain 168) protein is HTH-type transcriptional activator Btr (btr).